The chain runs to 512 residues: Kynurenine 3-monooxygenase (512 aa).

This sequence belongs to the aromatic-ring hydroxylase family. KMO subfamily. The cofactor is FAD.

It is found in the mitochondrion outer membrane. The catalysed reaction is L-kynurenine + NADPH + O2 + H(+) = 3-hydroxy-L-kynurenine + NADP(+) + H2O. The protein operates within cofactor biosynthesis; NAD(+) biosynthesis; quinolinate from L-kynurenine: step 1/3. Functionally, catalyzes the hydroxylation of L-kynurenine (L-Kyn) to form 3-hydroxy-L-kynurenine (L-3OHKyn). Required for synthesis of quinolinic acid. The polypeptide is Kynurenine 3-monooxygenase (bna4) (Aspergillus fumigatus (strain ATCC MYA-4609 / CBS 101355 / FGSC A1100 / Af293) (Neosartorya fumigata)).